We begin with the raw amino-acid sequence, 80 residues long: Exodeoxyribonuclease 7 small subunit (80 aa).

It belongs to the XseB family. In terms of assembly, heterooligomer composed of large and small subunits.

It is found in the cytoplasm. It carries out the reaction Exonucleolytic cleavage in either 5'- to 3'- or 3'- to 5'-direction to yield nucleoside 5'-phosphates.. Its function is as follows. Bidirectionally degrades single-stranded DNA into large acid-insoluble oligonucleotides, which are then degraded further into small acid-soluble oligonucleotides. The polypeptide is Exodeoxyribonuclease 7 small subunit (Cronobacter sakazakii (strain ATCC BAA-894) (Enterobacter sakazakii)).